A 378-amino-acid chain; its full sequence is GTP 3',8-cyclase 3 (378 aa).

Residues 40–259 (RCGRTMGDLR…STLGKKYGPI (220 aa)) enclose the Radical SAM core domain. Position 49 (Arg49) interacts with GTP. [4Fe-4S] cluster is bound by residues Cys56 and Cys60. S-adenosyl-L-methionine is bound at residue Tyr62. Position 63 (Cys63) interacts with [4Fe-4S] cluster. GTP is bound at residue Arg99. Residue Gly103 coordinates S-adenosyl-L-methionine. Residue Thr134 coordinates GTP. Ser158 lines the S-adenosyl-L-methionine pocket. Lys195 is a GTP binding site. An S-adenosyl-L-methionine-binding site is contributed by Met229. Residues Cys292 and Cys295 each contribute to the [4Fe-4S] cluster site. 297-299 (RSR) is a GTP binding site. Residue Cys309 participates in [4Fe-4S] cluster binding.

The protein belongs to the radical SAM superfamily. MoaA family. Monomer and homodimer. [4Fe-4S] cluster is required as a cofactor.

The enzyme catalyses GTP + AH2 + S-adenosyl-L-methionine = (8S)-3',8-cyclo-7,8-dihydroguanosine 5'-triphosphate + 5'-deoxyadenosine + L-methionine + A + H(+). It functions in the pathway cofactor biosynthesis; molybdopterin biosynthesis. Its function is as follows. Catalyzes the cyclization of GTP to (8S)-3',8-cyclo-7,8-dihydroguanosine 5'-triphosphate. This chain is GTP 3',8-cyclase 3, found in Mycobacterium bovis (strain ATCC BAA-935 / AF2122/97).